The chain runs to 380 residues: ATPase ASNA1 homolog (380 aa).

ATP is bound at residue 48–55 (KGGVGKTT). D77 is an active-site residue. Residues E248 and N275 each coordinate ATP.

Belongs to the arsA ATPase family. As to quaternary structure, homodimer.

It localises to the cytoplasm. Its subcellular location is the endoplasmic reticulum. Its function is as follows. ATPase required for the post-translational delivery of tail-anchored (TA) proteins to the endoplasmic reticulum. Recognizes and selectively binds the transmembrane domain of TA proteins in the cytosol. This complex then targets to the endoplasmic reticulum by membrane-bound receptors, where the tail-anchored protein is released for insertion. This process is regulated by ATP binding and hydrolysis. ATP binding drives the homodimer towards the closed dimer state, facilitating recognition of newly synthesized TA membrane proteins. ATP hydrolysis is required for insertion. Subsequently, the homodimer reverts towards the open dimer state, lowering its affinity for the membrane-bound receptor, and returning it to the cytosol to initiate a new round of targeting. The chain is ATPase ASNA1 homolog from Plasmodium yoelii yoelii.